The sequence spans 512 residues: Acid-sensing ion channel 2 (512 aa).

The Cytoplasmic segment spans residues 1–37; that stretch reads MDLKESPSEGSLQPSSIQIFANTSTLHGIRHIFVYGP. Residues Ser8 and Ser11 each carry the phosphoserine modification. The chain crosses the membrane as a helical span at residues 38–58; that stretch reads LTIRRVLWAVAFVGSLGLLLV. At 59-427 the chain is on the extracellular side; that stretch reads ESSERVSYYF…EQKKAYEVAA (369 aa). 6 disulfides stabilise this stretch: Cys92–Cys193, Cys289–Cys364, Cys307–Cys360, Cys311–Cys358, Cys320–Cys342, and Cys322–Cys334. N-linked (GlcNAc...) asparagine glycosylation is found at Asn365 and Asn392. The helical transmembrane segment at 428-448 threads the bilayer; it reads LLGDIGGQMGLFIGASLLTIL. Residues 441–443 carry the GAS motif; ion selectivity filter motif; the sequence is GAS. The Cytoplasmic portion of the chain corresponds to 449–512; that stretch reads ELFDYIYELI…ALGTLEEIAC (64 aa).

This sequence belongs to the amiloride-sensitive sodium channel (TC 1.A.6) family. ASIC2 subfamily. Can form homotrimers. Heterotrimer; forms functional heterotrimers producing channel with different properties. Forms heterotrimers with ASIC1; while ASIC1 determines current amplitude, ASIC2 influences the properties of the current. Forms heterotrimers with ASIC3; resulting in channels with distinct properties. Interacts with STOM; STOM regulates the gating of ASIC2-containing channels. Interacts with PICK1; promotes ASIC3 phosphorylation by PKC and activation of ASIC2/ASIC3 heterotrimers. In terms of tissue distribution, expressed in sciatic nerve and dorsal root ganglion (DRG) (at protein level). Both isoforms display the same expression pattern except in DRG where isoform 2 is more abundantly expressed. Widely distributed throughout the brain. Highly expressed in the main olfactory bulb, neo- and allo-cortical regions, hippocampal formation, habenula, basolateral amygdaloid nuclei, and cerebellum. In the olfactory system, expressed in the glomerular cell layer, the internal granular layer, and the mitral and internal plexiform cell layers. Within the glomerular layer, restricted to the periglomerular cells. In the neocortex, strongly expressed in the large pyramidal neurons in all cortical layers as well as in the oligo-, astro-, or micro-glia cells. In the hippocampal formation, expressed in dentate granule cells and hilar neurons, as well as in pyramidal cells of CA1-CA3 subfields. Expressed in stratum oriens and radiatum of all subfields. Within the thalamus, expressed moderately in the medial and lateral habenula. In the cerebellar cortex expressed in Purkinje cells and granule cells. Expressed at low levels in choroid plexus.

Its subcellular location is the cell membrane. It catalyses the reaction Na(+)(in) = Na(+)(out). The catalysed reaction is K(+)(in) = K(+)(out). The enzyme catalyses Li(+)(in) = Li(+)(out). Its activity is regulated as follows. Inhibited by the diuretic drug amiloride. Inhibited by gadolinium ions, the heterotrimer with ASIC3 being more sensitive. Zn(2+) potentiates the acid activation of ASIC2-containing homomeric and heteromeric channels. The snake venom mambalgin-1 and mambalgin-2 inhibit the homotrimers composed of ASIC1 and ASIC2 and have strong analgesic effects. Forms pH-gated trimeric sodium channels that act as postsynaptic excitatory sensors in the nervous system. Upon extracellular acidification, these channels generate rapid, transient inward currents that fully desensitize. Highly selective for sodium, they are permeable to other cations. By forming heterotrimeric channels with ASIC1, could contribute to synaptic plasticity, learning, and memory. Additionally, as acid sensors at nerve terminals, plays a role in mechanosensation and phototransduction. In terms of biological role, has no pH-gated sodium channel activity per se but can associate with other ASICs to produce functional channels with specific properties. The polypeptide is Acid-sensing ion channel 2 (Rattus norvegicus (Rat)).